A 267-amino-acid polypeptide reads, in one-letter code: Interleukin-1 beta (267 aa).

A propeptide spanning residues 1–115 (MAPVPELTSE…DTWDDGFVCD (115 aa)) is cleaved from the precursor.

The protein belongs to the IL-1 family. In terms of assembly, monomer. In its precursor form, weakly interacts with full-length MEFV; the mature cytokine does not interact at all. Interacts with integrins ITGAV:ITGBV and ITGA5:ITGB1; integrin-binding is required for IL1B signaling. Interacts with cargo receptor TMED10; the interaction is direct and is required for the secretion of IL1B mature form. Interacts with HSP90AB1; the interaction facilitates cargo translocation into the ERGIC. Interacts with HSP90B1; the interaction facilitates cargo translocation into the ERGIC.

It localises to the cytoplasm. Its subcellular location is the cytosol. It is found in the secreted. The protein localises to the lysosome. The protein resides in the extracellular exosome. Its function is as follows. Potent pro-inflammatory cytokine. Initially discovered as the major endogenous pyrogen, induces prostaglandin synthesis, neutrophil influx and activation, T-cell activation and cytokine production, B-cell activation and antibody production, and fibroblast proliferation and collagen production. Promotes Th17 differentiation of T-cells. Synergizes with IL12/interleukin-12 to induce IFNG synthesis from T-helper 1 (Th1) cells. Plays a role in angiogenesis by inducing VEGF production synergistically with TNF and IL6. Involved in transduction of inflammation downstream of pyroptosis: its mature form is specifically released in the extracellular milieu by passing through the gasdermin-D (GSDMD) pore. The protein is Interleukin-1 beta (IL1B) of Felis catus (Cat).